We begin with the raw amino-acid sequence, 315 residues long: 4-diphosphocytidyl-2-C-methyl-D-erythritol kinase (315 aa).

Lys8 is a catalytic residue. 93–103 (PVAAGLAGGSS) lines the ATP pocket. The active site involves Asp135.

The protein belongs to the GHMP kinase family. IspE subfamily.

It catalyses the reaction 4-CDP-2-C-methyl-D-erythritol + ATP = 4-CDP-2-C-methyl-D-erythritol 2-phosphate + ADP + H(+). Its pathway is isoprenoid biosynthesis; isopentenyl diphosphate biosynthesis via DXP pathway; isopentenyl diphosphate from 1-deoxy-D-xylulose 5-phosphate: step 3/6. In terms of biological role, catalyzes the phosphorylation of the position 2 hydroxy group of 4-diphosphocytidyl-2C-methyl-D-erythritol. This is 4-diphosphocytidyl-2-C-methyl-D-erythritol kinase from Heliobacterium modesticaldum (strain ATCC 51547 / Ice1).